The primary structure comprises 365 residues: Anthranilate phosphoribosyltransferase (365 aa).

5-phospho-alpha-D-ribose 1-diphosphate is bound by residues G96, 99–100 (GD), T104, 106–109 (NIST), 124–132 (KHGNRSVSS), and S136. Residue G96 coordinates anthranilate. Residue S108 coordinates Mg(2+). Position 127 (N127) interacts with anthranilate. R182 provides a ligand contact to anthranilate. The Mg(2+) site is built by D240 and E241.

Belongs to the anthranilate phosphoribosyltransferase family. As to quaternary structure, homodimer. Mg(2+) is required as a cofactor.

The enzyme catalyses N-(5-phospho-beta-D-ribosyl)anthranilate + diphosphate = 5-phospho-alpha-D-ribose 1-diphosphate + anthranilate. Its pathway is amino-acid biosynthesis; L-tryptophan biosynthesis; L-tryptophan from chorismate: step 2/5. Its function is as follows. Catalyzes the transfer of the phosphoribosyl group of 5-phosphorylribose-1-pyrophosphate (PRPP) to anthranilate to yield N-(5'-phosphoribosyl)-anthranilate (PRA). This is Anthranilate phosphoribosyltransferase from Colwellia psychrerythraea (strain 34H / ATCC BAA-681) (Vibrio psychroerythus).